The chain runs to 346 residues: Cell shape-determining protein MreC (346 aa).

The stretch at 89–118 (NRRLKAELAEMRQWRDRALALQDQNDRFKS) forms a coiled coil. The disordered stretch occupies residues 292 to 346 (SLPPVTTEDPQTSILSNPVSRPVAPTPSPATATPSAAPAARPATTATPPQTGAPR). The segment covering 299–308 (EDPQTSILSN) has biased composition (polar residues). Residues 309 to 340 (PVSRPVAPTPSPATATPSAAPAARPATTATPP) are compositionally biased toward low complexity.

This sequence belongs to the MreC family. As to quaternary structure, interacts with penicillin-binding proteins (PBP2, PBP1a, PBP1b, PBP2a and PBP2b). Interacts with outer membrane proteins belonging to the TonB-dependent receptor family of transport proteins.

Its subcellular location is the periplasm. In terms of biological role, involved in formation and maintenance of cell shape. Required for the spatial organization of components of the peptidoglycan-synthesizing holoenzyme in the periplasm and peptidoglycan synthetic activity. In Caulobacter vibrioides (strain NA1000 / CB15N) (Caulobacter crescentus), this protein is Cell shape-determining protein MreC.